The primary structure comprises 937 residues: Isoleucine--tRNA ligase (937 aa).

The short motif at 58–68 (PYANGNIHIGH) is the 'HIGH' region element. Residue Glu-560 coordinates L-isoleucyl-5'-AMP. The 'KMSKS' region motif lies at 601–605 (KMSKS). Lys-604 serves as a coordination point for ATP. Positions 900, 903, 920, and 923 each coordinate Zn(2+).

Belongs to the class-I aminoacyl-tRNA synthetase family. IleS type 1 subfamily. In terms of assembly, monomer. The cofactor is Zn(2+).

It is found in the cytoplasm. It catalyses the reaction tRNA(Ile) + L-isoleucine + ATP = L-isoleucyl-tRNA(Ile) + AMP + diphosphate. In terms of biological role, catalyzes the attachment of isoleucine to tRNA(Ile). As IleRS can inadvertently accommodate and process structurally similar amino acids such as valine, to avoid such errors it has two additional distinct tRNA(Ile)-dependent editing activities. One activity is designated as 'pretransfer' editing and involves the hydrolysis of activated Val-AMP. The other activity is designated 'posttransfer' editing and involves deacylation of mischarged Val-tRNA(Ile). The sequence is that of Isoleucine--tRNA ligase from Thioalkalivibrio sulfidiphilus (strain HL-EbGR7).